Reading from the N-terminus, the 256-residue chain is Zinc import ATP-binding protein ZnuC 1 (256 aa).

One can recognise an ABC transporter domain in the interval 5–220 (LTLQDVCVVF…PKYIALFGQQ (216 aa)). Residue 37–44 (GPNGAGKS) participates in ATP binding. Residues 232-256 (HHHNHDLSGEPSDGSCCSKNKKAHQ) form a disordered region.

It belongs to the ABC transporter superfamily. Zinc importer (TC 3.A.1.15.5) family. As to quaternary structure, the complex is composed of two ATP-binding proteins (ZnuC), two transmembrane proteins (ZnuB) and a solute-binding protein (ZnuA).

It localises to the cell inner membrane. It catalyses the reaction Zn(2+)(out) + ATP(in) + H2O(in) = Zn(2+)(in) + ADP(in) + phosphate(in) + H(+)(in). Functionally, part of the ABC transporter complex ZnuABC involved in zinc import. Responsible for energy coupling to the transport system. This chain is Zinc import ATP-binding protein ZnuC 1, found in Aliivibrio fischeri (strain ATCC 700601 / ES114) (Vibrio fischeri).